A 381-amino-acid chain; its full sequence is Transcription termination factor 4, mitochondrial (381 aa).

The transit peptide at 1–42 (MAAFGRQVLDWHRLIPLTWACMARQTPHLGEQRRTTASLLRK) directs the protein to the mitochondrion. MTERF repeat units lie at residues 142–172 (CVVL…LGLG), 177–204 (KRVL…LKEK), 209–239 (VQQV…YAYF), 245–270 (HPDI…YLER), and 290–318 (LKDI…VFKK). Residues 310-327 (VEEFQVFKKLLAREEEES) form a dimerization with NSUN4 region. Residues 322-381 (REEEESESSTSDDKRASLDEDEDDDDEEDNDEDDNDEDDDDEDDDEAEDNDEDEDDDEEE) are disordered. Over residues 340-381 (DEDEDDDDEEDNDEDDNDEDDDDEDDDEAEDNDEDEDDDEEE) the composition is skewed to acidic residues.

This sequence belongs to the mTERF family. As to quaternary structure, heterodimer with NSUN4; this interaction may be required for NSUN4 recruitment to the mitochondrial large ribosomal subunit. In terms of processing, the mature mitochondrial protein exists in 2 forms differing at the level of their N-terminus, one is starting at residue 43 and the other at residue 48.

It is found in the mitochondrion. In terms of biological role, regulator of mitochondrial ribosome biogenesis and translation. Binds to mitochondrial ribosomal RNAs 16S, 12S and 7S and targets NSUN4 RNA methyltransferase to the mitochondrial large ribosomal subunit (39S). The protein is Transcription termination factor 4, mitochondrial (MTERF4) of Homo sapiens (Human).